Reading from the N-terminus, the 267-residue chain is tRNA pseudouridine synthase A (267 aa).

Catalysis depends on Asp-51, which acts as the Nucleophile. Tyr-109 contributes to the substrate binding site.

It belongs to the tRNA pseudouridine synthase TruA family. As to quaternary structure, homodimer.

The enzyme catalyses uridine(38/39/40) in tRNA = pseudouridine(38/39/40) in tRNA. Formation of pseudouridine at positions 38, 39 and 40 in the anticodon stem and loop of transfer RNAs. This chain is tRNA pseudouridine synthase A, found in Staphylococcus epidermidis (strain ATCC 35984 / DSM 28319 / BCRC 17069 / CCUG 31568 / BM 3577 / RP62A).